Consider the following 115-residue polypeptide: NAD(P)H-quinone oxidoreductase subunit M (115 aa).

Belongs to the complex I NdhM subunit family. In terms of assembly, NDH-1 can be composed of about 15 different subunits; different subcomplexes with different compositions have been identified which probably have different functions.

It localises to the cellular thylakoid membrane. The enzyme catalyses a plastoquinone + NADH + (n+1) H(+)(in) = a plastoquinol + NAD(+) + n H(+)(out). It catalyses the reaction a plastoquinone + NADPH + (n+1) H(+)(in) = a plastoquinol + NADP(+) + n H(+)(out). Functionally, NDH-1 shuttles electrons from an unknown electron donor, via FMN and iron-sulfur (Fe-S) centers, to quinones in the respiratory and/or the photosynthetic chain. The immediate electron acceptor for the enzyme in this species is believed to be plastoquinone. Couples the redox reaction to proton translocation, and thus conserves the redox energy in a proton gradient. Cyanobacterial NDH-1 also plays a role in inorganic carbon-concentration. The polypeptide is NAD(P)H-quinone oxidoreductase subunit M (Prochlorococcus marinus (strain SARG / CCMP1375 / SS120)).